A 137-amino-acid chain; its full sequence is Phosphoinositide-interacting protein (137 aa).

Helical transmembrane passes span 56–76 (IVIM…TCLA) and 94–114 (PGFL…VPII).

Interacts with TRPV1.

Its subcellular location is the membrane. Regulatory subunit of TRPV1, a molecular sensor of noxious heat and capsaicin. Positively regulates TRPV1 channel activity via phosphatidylinositol 4,5-bisphosphate (PIP2). Binds various phosphoinositide, including phosphatidylinositol 4,5-bisphosphate (PIP2), but not phosphatidylinositol (PI). The polypeptide is Phosphoinositide-interacting protein (PIRT) (Homo sapiens (Human)).